The primary structure comprises 200 residues: ATP-dependent Clp protease proteolytic subunit (200 aa).

S104 acts as the Nucleophile in catalysis. H129 is a catalytic residue.

It belongs to the peptidase S14 family. In terms of assembly, fourteen ClpP subunits assemble into 2 heptameric rings which stack back to back to give a disk-like structure with a central cavity, resembling the structure of eukaryotic proteasomes.

It is found in the cytoplasm. The enzyme catalyses Hydrolysis of proteins to small peptides in the presence of ATP and magnesium. alpha-casein is the usual test substrate. In the absence of ATP, only oligopeptides shorter than five residues are hydrolyzed (such as succinyl-Leu-Tyr-|-NHMec, and Leu-Tyr-Leu-|-Tyr-Trp, in which cleavage of the -Tyr-|-Leu- and -Tyr-|-Trp bonds also occurs).. Cleaves peptides in various proteins in a process that requires ATP hydrolysis. Has a chymotrypsin-like activity. Plays a major role in the degradation of misfolded proteins. This is ATP-dependent Clp protease proteolytic subunit from Rubrobacter xylanophilus (strain DSM 9941 / JCM 11954 / NBRC 16129 / PRD-1).